The sequence spans 621 residues: DnaJ homolog subfamily C member 2 (621 aa).

An N-acetylmethionine modification is found at Met1. Residues 23-31 (STLCQVEPV) are epitope (recognized by CD8(+) cytotoxic T-lymphocytes). Phosphoserine is present on residues Ser47, Ser49, Ser60, and Ser63. Residues 88–161 (DHYAVLGLGH…VKRRAFNSVD (74 aa)) form the J domain. A ZRF1-UBD region spans residues 160–250 (VDPTFDNSVP…RDERRWIEKQ (91 aa)). 2 disordered regions span residues 294-315 (EKKA…QRQA) and 426-453 (KEEA…GSKN). SANT domains follow at residues 449–511 (NGSK…KLDP) and 549–604 (TDFT…EMVK).

As to quaternary structure, component of ribosome-associated complex (RAC), a heterodimer composed of Hsp70/DnaK-type chaperone HSPA14 and Hsp40/DnaJ-type chaperone DNAJC2. Interacts (via ZRF1-UBD region) with ID1. In terms of processing, phosphorylated in M (mitotic) phase. As to expression, widely expressed.

The protein localises to the nucleus. It is found in the cytoplasm. It localises to the cytosol. Functionally, acts both as a chaperone in the cytosol and as a chromatin regulator in the nucleus. When cytosolic, acts as a molecular chaperone: component of the ribosome-associated complex (RAC), a complex involved in folding or maintaining nascent polypeptides in a folding-competent state. In the RAC complex, stimulates the ATPase activity of the ribosome-associated pool of Hsp70-type chaperones HSPA14 that bind to the nascent polypeptide chain. When nuclear, mediates the switching from polycomb-repressed genes to an active state: specifically recruited at histone H2A ubiquitinated at 'Lys-119' (H2AK119ub), and promotes the displacement of the polycomb PRC1 complex from chromatin, thereby facilitating transcription activation. This is DnaJ homolog subfamily C member 2 (DNAJC2) from Homo sapiens (Human).